Here is a 370-residue protein sequence, read N- to C-terminus: Putative alanine racemase 2 (370 aa).

Lys-38 (proton acceptor; specific for D-alanine) is an active-site residue. Position 38 is an N6-(pyridoxal phosphate)lysine (Lys-38). Tyr-266 acts as the Proton acceptor; specific for L-alanine in catalysis.

It belongs to the alanine racemase family. The cofactor is pyridoxal 5'-phosphate.

It catalyses the reaction L-alanine = D-alanine. This chain is Putative alanine racemase 2 (alr2), found in Schizosaccharomyces pombe (strain 972 / ATCC 24843) (Fission yeast).